The following is a 510-amino-acid chain: 2,3-bisphosphoglycerate-independent phosphoglycerate mutase (510 aa).

The Mn(2+) site is built by Asp-12 and Ser-62. Residue Ser-62 is the Phosphoserine intermediate of the active site. Substrate contacts are provided by residues His-121, 151–152 (RD), Arg-183, Arg-189, 258–261 (RPDR), and Lys-331. Residues Asp-398, His-402, Asp-439, His-440, and His-458 each coordinate Mn(2+).

This sequence belongs to the BPG-independent phosphoglycerate mutase family. In terms of assembly, monomer. Mn(2+) is required as a cofactor.

The catalysed reaction is (2R)-2-phosphoglycerate = (2R)-3-phosphoglycerate. The protein operates within carbohydrate degradation; glycolysis; pyruvate from D-glyceraldehyde 3-phosphate: step 3/5. In terms of biological role, catalyzes the interconversion of 2-phosphoglycerate and 3-phosphoglycerate. The protein is 2,3-bisphosphoglycerate-independent phosphoglycerate mutase of Clostridioides difficile (strain 630) (Peptoclostridium difficile).